Here is a 448-residue protein sequence, read N- to C-terminus: Tubulin beta-1 chain (448 aa).

GTP-binding residues include glutamine 11, glutamate 69, serine 138, glycine 142, threonine 143, glycine 144, asparagine 204, and asparagine 226. Glutamate 69 contacts Mg(2+). Positions 428 to 448 (AGIGDDEEEDEEGVMGEEIDA) are disordered. Residues 430–448 (IGDDEEEDEEGVMGEEIDA) are compositionally biased toward acidic residues.

The protein belongs to the tubulin family. Dimer of alpha and beta chains. A typical microtubule is a hollow water-filled tube with an outer diameter of 25 nm and an inner diameter of 15 nM. Alpha-beta heterodimers associate head-to-tail to form protofilaments running lengthwise along the microtubule wall with the beta-tubulin subunit facing the microtubule plus end conferring a structural polarity. Microtubules usually have 13 protofilaments but different protofilament numbers can be found in some organisms and specialized cells. Requires Mg(2+) as cofactor.

It is found in the cytoplasm. Its subcellular location is the cytoskeleton. Its function is as follows. Tubulin is the major constituent of microtubules, a cylinder consisting of laterally associated linear protofilaments composed of alpha- and beta-tubulin heterodimers. Microtubules grow by the addition of GTP-tubulin dimers to the microtubule end, where a stabilizing cap forms. Below the cap, tubulin dimers are in GDP-bound state, owing to GTPase activity of alpha-tubulin. This Echinococcus multilocularis (Fox tapeworm) protein is Tubulin beta-1 chain (TUB-1).